Consider the following 242-residue polypeptide: Tryptophan synthase alpha chain (242 aa).

Catalysis depends on proton acceptor residues Glu32 and Asp43.

It belongs to the TrpA family. In terms of assembly, tetramer of two alpha and two beta chains.

It is found in the plastid. The protein localises to the chloroplast. It catalyses the reaction (1S,2R)-1-C-(indol-3-yl)glycerol 3-phosphate + L-serine = D-glyceraldehyde 3-phosphate + L-tryptophan + H2O. Its pathway is amino-acid biosynthesis; L-tryptophan biosynthesis; L-tryptophan from chorismate: step 5/5. In terms of biological role, the alpha subunit is responsible for the aldol cleavage of indoleglycerol phosphate to indole and glyceraldehyde 3-phosphate. In Cyanidium caldarium (Red alga), this protein is Tryptophan synthase alpha chain.